We begin with the raw amino-acid sequence, 212 residues long: uncharacterized protein (212 aa).

A signal peptide spans 1-21 (MRRLTAFGLALLLLASGVARG).

It to E.coli YfaT and T.maritima TM0986.

This is an uncharacterized protein from Pseudomonas aeruginosa (strain ATCC 15692 / DSM 22644 / CIP 104116 / JCM 14847 / LMG 12228 / 1C / PRS 101 / PAO1).